A 429-amino-acid chain; its full sequence is UDP-N-acetylglucosamine 1-carboxyvinyltransferase (429 aa).

22–23 (KN) is a binding site for phosphoenolpyruvate. Position 102 (R102) interacts with UDP-N-acetyl-alpha-D-glucosamine. Residue C126 is the Proton donor of the active site. C126 carries the 2-(S-cysteinyl)pyruvic acid O-phosphothioketal modification. Residues 131–135 (RPVDL), D316, and I338 each bind UDP-N-acetyl-alpha-D-glucosamine.

This sequence belongs to the EPSP synthase family. MurA subfamily.

It localises to the cytoplasm. The catalysed reaction is phosphoenolpyruvate + UDP-N-acetyl-alpha-D-glucosamine = UDP-N-acetyl-3-O-(1-carboxyvinyl)-alpha-D-glucosamine + phosphate. It participates in cell wall biogenesis; peptidoglycan biosynthesis. In terms of biological role, cell wall formation. Adds enolpyruvyl to UDP-N-acetylglucosamine. The sequence is that of UDP-N-acetylglucosamine 1-carboxyvinyltransferase from Methylobacterium nodulans (strain LMG 21967 / CNCM I-2342 / ORS 2060).